Reading from the N-terminus, the 456-residue chain is UDP-N-acetylmuramoylalanine--D-glutamate ligase (456 aa).

119–125 (GSNGKTT) lines the ATP pocket.

The protein belongs to the MurCDEF family.

It is found in the cytoplasm. It carries out the reaction UDP-N-acetyl-alpha-D-muramoyl-L-alanine + D-glutamate + ATP = UDP-N-acetyl-alpha-D-muramoyl-L-alanyl-D-glutamate + ADP + phosphate + H(+). The protein operates within cell wall biogenesis; peptidoglycan biosynthesis. Functionally, cell wall formation. Catalyzes the addition of glutamate to the nucleotide precursor UDP-N-acetylmuramoyl-L-alanine (UMA). This Limosilactobacillus reuteri (strain DSM 20016) (Lactobacillus reuteri) protein is UDP-N-acetylmuramoylalanine--D-glutamate ligase.